The primary structure comprises 607 residues: Translation initiation factor IF-2 (607 aa).

The tract at residues 54–93 (SAPQAQDSTPVAETPAAAQPAAPQAASSQPAAAQAAQAVA) is disordered. Over residues 62 to 93 (TPVAETPAAAQPAAPQAASSQPAAAQAAQAVA) the composition is skewed to low complexity. One can recognise a tr-type G domain in the interval 108-281 (HRAPVVTIMG…ELEDLRADPK (174 aa)). A G1 region spans residues 117-124 (GHVDHGKT). 117-124 (GHVDHGKT) lines the GTP pocket. The segment at 142–146 (GITQH) is G2. The G3 stretch occupies residues 163 to 166 (DTPG). Residues 163-167 (DTPGH) and 217-220 (NKVD) contribute to the GTP site. Residues 217-220 (NKVD) form a G4 region. The G5 stretch occupies residues 253 to 255 (SAK).

The protein belongs to the TRAFAC class translation factor GTPase superfamily. Classic translation factor GTPase family. IF-2 subfamily.

The protein resides in the cytoplasm. Its function is as follows. One of the essential components for the initiation of protein synthesis. Protects formylmethionyl-tRNA from spontaneous hydrolysis and promotes its binding to the 30S ribosomal subunits. Also involved in the hydrolysis of GTP during the formation of the 70S ribosomal complex. The polypeptide is Translation initiation factor IF-2 (Deinococcus deserti (strain DSM 17065 / CIP 109153 / LMG 22923 / VCD115)).